The chain runs to 237 residues: Uridylate kinase (237 aa).

12–15 is an ATP binding site; the sequence is KLSG. The tract at residues 20–25 is involved in allosteric activation by GTP; it reads GEDGLG. G54 is a UMP binding site. Positions 55 and 59 each coordinate ATP. UMP contacts are provided by residues D74 and 135 to 142; that span reads TGNPFFTT. Residues T162, Y168, and D171 each contribute to the ATP site.

The protein belongs to the UMP kinase family. In terms of assembly, homohexamer.

It is found in the cytoplasm. It carries out the reaction UMP + ATP = UDP + ADP. It participates in pyrimidine metabolism; CTP biosynthesis via de novo pathway; UDP from UMP (UMPK route): step 1/1. Its activity is regulated as follows. Allosterically activated by GTP. Inhibited by UTP. Catalyzes the reversible phosphorylation of UMP to UDP. The chain is Uridylate kinase from Haemophilus influenzae (strain 86-028NP).